A 1445-amino-acid chain; its full sequence is 3'-5' RNA helicase YTHDC2 (1445 aa).

The disordered stretch occupies residues 1–50 (MSRPSSVSPRPPAPSGGGTGGGGGGSGGGGGGGGGGPASCGPGGGGRAKG). Residues 15–48 (SGGGTGGGGGGSGGGGGGGGGGPASCGPGGGGRA) show a composition bias toward gly residues. The region spanning 53–121 (DIRIDEEVKI…NRYLTVKKKD (69 aa)) is the R3H domain. The region spanning 218-384 (VKIIKENKVV…FGSCPVIYIQ (167 aa)) is the Helicase ATP-binding domain. 231–238 (GETGSGKT) is an ATP binding site. Residues 331 to 334 (DEVH) carry the DEAH box motif. 2 ANK repeats span residues 521–553 (TSAT…SKAS) and 554–586 (NGWM…FGNL). The region spanning 627-799 (LLYNICHSCD…ELCLHTKLLA (173 aa)) is the Helicase C-terminal domain. A phosphoserine mark is found at Ser-1104, Ser-1105, and Ser-1107. Over residues 1179-1189 (EQSAGLQQPSG) the composition is skewed to polar residues. The interval 1179–1303 (EQSAGLQQPS…SPSPRPNMPI (125 aa)) is disordered. A compositionally biased stretch (basic and acidic residues) spans 1246-1264 (KYKDRGILHPKRSTDDRSD). Residues 1265–1279 (QSSVKSTDSSSYPSP) show a composition bias toward low complexity. Phosphoserine is present on residues Ser-1278, Ser-1282, and Ser-1296. In terms of domain architecture, YTH spans 1303–1433 (IRYFIMKSSN…QVGEQLLQLW (131 aa)). Residues 1309–1311 (KSS), Trp-1325, and Trp-1375 contribute to the RNA site.

Belongs to the DEAD box helicase family. DEAH subfamily. As to quaternary structure, interacts with MEIOC; binds transcripts that regulate the mitotic cell cycle inhibiting progression into metaphase, thereby allowing meiotic prophase to proceed normally. Interacts (via ANK repeats) with XRN1. Interacts with ZCCHC4. Associates with the small ribosomal subunit. Interacts with RBM46. Present in male and female germ cells (at protein level). Highly expressed in testis. Not detected in spermatogonia next to the tubule wall but is strongly expressed in spermatocytes, suggesting that it is up-regulated in germ cells upon entry into meiosis (at protein level).

Its subcellular location is the cytoplasm. The protein resides in the perinuclear region. It catalyses the reaction ATP + H2O = ADP + phosphate + H(+). Functionally, 3'-5' RNA helicase that plays a key role in the male and female germline by promoting transition from mitotic to meiotic divisions in stem cells. Specifically recognizes and binds N6-methyladenosine (m6A)-containing RNAs, a modification present at internal sites of mRNAs and some non-coding RNAs that plays a role in the efficiency of RNA processing and stability. Essential for ensuring a successful progression of the meiotic program in the germline by regulating the level of m6A-containing RNAs. Acts by binding and promoting degradation of m6A-containing mRNAs: the 3'-5' RNA helicase activity is required for this process and RNA degradation may be mediated by XRN1 exoribonuclease. Required for both spermatogenesis and oogenesis. The chain is 3'-5' RNA helicase YTHDC2 from Mus musculus (Mouse).